The primary structure comprises 359 residues: Guanine nucleotide-binding protein subunit alpha-11 (359 aa).

S-palmitoyl cysteine attachment occurs at residues Cys9 and Cys10. The 322-residue stretch at 38–359 folds into the G-alpha domain; that stretch reads RELKLLLLGT…QLNLKEYNLV (322 aa). Positions 41–54 are G1 motif; it reads KLLLLGTGESGKST. GTP is bound by residues 46–53 and 180–183; these read GTGESGKS and LRVR. Ser53 provides a ligand contact to Mg(2+). The segment at 178–186 is G2 motif; the sequence is DVLRVRVPT. Residue Thr186 participates in Mg(2+) binding. The interval 201–210 is G3 motif; it reads FRMVDVGGQR. The residue at position 209 (Gln209) is a Deamidated glutamine; by Photorhabdus PAU_02230. Positions 270–277 are G4 motif; the sequence is ILFLNKKD. GTP is bound by residues 274–277 and Ala331; that span reads NKKD. A G5 motif region spans residues 329-334; that stretch reads TCATDT.

Belongs to the G-alpha family. G(q) subfamily. G proteins are composed of 3 units; alpha, beta and gamma. The alpha chain contains the guanine nucleotide binding site. Interacts with RGS22. Interacts with NTSR1. As to quaternary structure, (Microbial infection) Interacts with human cytomegalovirus (HHV-5) US28. (Microbial infection) Deamidated at Gln-209 by Photorhabdus asymbiotica toxin PAU_02230, blocking GTP hydrolysis of heterotrimeric GNAQ or GNA11 and G-alphai (GNAI1, GNAI2 or GNAI3) proteins, thereby activating RhoA. As to expression, expressed in testis.

The protein resides in the cell membrane. Its subcellular location is the cytoplasm. The catalysed reaction is GTP + H2O = GDP + phosphate + H(+). Its function is as follows. Guanine nucleotide-binding proteins (G proteins) function as transducers downstream of G protein-coupled receptors (GPCRs) in numerous signaling cascades. The alpha chain contains the guanine nucleotide binding site and alternates between an active, GTP-bound state and an inactive, GDP-bound state. Signaling by an activated GPCR promotes GDP release and GTP binding. The alpha subunit has a low GTPase activity that converts bound GTP to GDP, thereby terminating the signal. Both GDP release and GTP hydrolysis are modulated by numerous regulatory proteins. Signaling is mediated via phospholipase C-beta-dependent inositol lipid hydrolysis for signal propagation: activates phospholipase C-beta: following GPCR activation, GNA11 activates PLC-beta (PLCB1, PLCB2, PLCB3 or PLCB4), leading to production of diacylglycerol (DAG) and inositol 1,4,5-trisphosphate (IP3). Transduces FFAR4 signaling in response to long-chain fatty acids (LCFAs). Together with GNAQ, required for heart development. In the respiratory epithelium, transmits OXGR1-dependent signals that lead to downstream intracellular Ca(2+) release and mucocilliary clearance of airborne pathogens. The sequence is that of Guanine nucleotide-binding protein subunit alpha-11 (GNA11) from Homo sapiens (Human).